A 501-amino-acid chain; its full sequence is uncharacterized protein (501 aa).

Residues 14–237 (EKFGFDRQKT…GFSKKRDNVN (224 aa)) form the BAR domain. At threonine 285 the chain carries Phosphothreonine. Disordered stretches follow at residues 302-321 (IASS…DVSD) and 329-414 (SAVD…RSYS). Positions 309-320 (QHTEDNYNKDVS) are enriched in basic and acidic residues. A compositionally biased stretch (polar residues) spans 390-402 (SQCNVSPSPSNIS). Serine 414 is subject to Phosphoserine. Positions 421-487 (SSRKVVRMKY…PSNYCVPAHP (67 aa)) constitute an SH3 domain.

It is found in the cytoplasm. This is an uncharacterized protein from Schizosaccharomyces pombe (strain 972 / ATCC 24843) (Fission yeast).